The primary structure comprises 236 residues: Small ribosomal subunit protein uS2c (236 aa).

The protein belongs to the universal ribosomal protein uS2 family.

It localises to the plastid. It is found in the chloroplast. The chain is Small ribosomal subunit protein uS2c (rps2) from Platanus occidentalis (Sycamore).